The following is a 354-amino-acid chain: Rhodopsin (354 aa).

Over 1–36 (MNGTEGPNFYIPMSNKTGVVRSPFEYPQYYLAEPWK) the chain is Extracellular. N-linked (GlcNAc...) asparagine glycosylation is found at asparagine 2 and asparagine 15. Residues 37-61 (YSILAAYMFLLILLGFPINFMTLYV) form a helical membrane-spanning segment. Over 62-73 (TIQHKKLRTPLN) the chain is Cytoplasmic. The helical transmembrane segment at 74 to 96 (YILLNLAFANHFMVLCGFTITLY) threads the bilayer. Topologically, residues 97–110 (TSLHGYFVFGQSGC) are extracellular. Cysteine 110 and cysteine 187 are joined by a disulfide. The helical transmembrane segment at 111-133 (YFEGFFATLGGEIALWSLVALAI) threads the bilayer. The 'Ionic lock' involved in activated form stabilization signature appears at 134 to 136 (ERY). The Cytoplasmic portion of the chain corresponds to 134-152 (ERYIVVCKPMSNFRFGENH). Residues 153-173 (AMMGVAFTWIMALACAVPPLF) form a helical membrane-spanning segment. At 174–202 (GWSRYIPEGMQCSCGVDYYTLKPEINNES) the chain is on the extracellular side. A helical transmembrane segment spans residues 203-224 (FVIYMFVVHFLIPLIIITFCYG). The Cytoplasmic portion of the chain corresponds to 225 to 252 (RLVCTVKEAAAQQQESATTQKAEKEVTR). A helical membrane pass occupies residues 253-274 (MVIIMVIFFLICWVPYAYVAFY). The Extracellular segment spans residues 275 to 286 (IFCNQGSEFGPI). The chain crosses the membrane as a helical span at residues 287–308 (FMTVPAFFAKSSAIYNPVIYIM). At lysine 296 the chain carries N6-(retinylidene)lysine. Topologically, residues 309-354 (LNKQFRNCMITTLCCGKNPFGDDDASSAATSKTEATSVSTSQVSPA) are cytoplasmic. 2 S-palmitoyl cysteine lipidation sites follow: cysteine 322 and cysteine 323. A disordered region spans residues 332 to 354 (DASSAATSKTEATSVSTSQVSPA). Residues 334–354 (SSAATSKTEATSVSTSQVSPA) are compositionally biased toward low complexity.

It belongs to the G-protein coupled receptor 1 family. Opsin subfamily. Post-translationally, contains one covalently linked retinal chromophore. Upon light absorption, the covalently bound 11-cis-retinal is converted to all-trans-retinal. After hydrolysis of the Schiff base and release of the covalently bound all-trans-retinal, active rhodopsin is regenerated by binding of a fresh molecule of 11-cis-retinal.

It localises to the membrane. The protein resides in the cell projection. The protein localises to the cilium. It is found in the photoreceptor outer segment. In terms of biological role, photoreceptor required for image-forming vision at low light intensity. Required for photoreceptor cell viability after birth. Light-induced isomerization of 11-cis to all-trans retinal triggers a conformational change that activates signaling via G-proteins. Subsequent receptor phosphorylation mediates displacement of the bound G-protein alpha subunit by arrestin and terminates signaling. The polypeptide is Rhodopsin (RHO) (Rana temporaria (European common frog)).